The chain runs to 420 residues: UDP-N-acetyl-D-mannosamine dehydrogenase (420 aa).

5 residues coordinate NAD(+): tyrosine 13, isoleucine 14, aspartate 33, threonine 85, and threonine 126. Residues arginine 160, valine 161, lysine 212, asparagine 216, arginine 219, histidine 250, arginine 252, and glycine 263 each contribute to the UDP-N-acetyl-alpha-D-mannosaminouronate site. The active-site Proton donor/acceptor is the lysine 212. The Nucleophile role is filled by cysteine 266. Residues phenylalanine 330 and lysine 331 each contribute to the UDP-N-acetyl-alpha-D-mannosaminouronate site. Arginine 338 is a binding site for NAD(+). Residue lysine 416 coordinates UDP-N-acetyl-alpha-D-mannosaminouronate.

It belongs to the UDP-glucose/GDP-mannose dehydrogenase family. WecC subfamily. As to quaternary structure, homodimer.

The enzyme catalyses UDP-N-acetyl-alpha-D-mannosamine + 2 NAD(+) + H2O = UDP-N-acetyl-alpha-D-mannosaminouronate + 2 NADH + 3 H(+). Its pathway is bacterial outer membrane biogenesis; enterobacterial common antigen biosynthesis. In terms of biological role, catalyzes the four-electron oxidation of UDP-N-acetyl-D-mannosamine (UDP-ManNAc), reducing NAD(+) and releasing UDP-N-acetylmannosaminuronic acid (UDP-ManNAcA). This chain is UDP-N-acetyl-D-mannosamine dehydrogenase, found in Yersinia pestis.